A 209-amino-acid polypeptide reads, in one-letter code: MTENKHRRPVVIGVTGGSGSGKTTVSNAIYNQLSGQSLLILQQDSYYNDQSEMTMAERHAVNYDHPLAFDTDLMIKQIKQLLAYQPIEKPVYDYEQYTRSDKTIHQEPRDVIIVEGVLILDDQRLRDLMDIKVFVDTDDDIRIIRRIQRDIKERGRTLDSVIGQYLATVKPMYHQFVEPTKRYADLIVPEGGENEVAIDLLTTKVRSIL.

ATP is bound at residue 16 to 23; it reads GGSGSGKT.

It belongs to the uridine kinase family.

The protein resides in the cytoplasm. The enzyme catalyses uridine + ATP = UMP + ADP + H(+). The catalysed reaction is cytidine + ATP = CMP + ADP + H(+). It functions in the pathway pyrimidine metabolism; CTP biosynthesis via salvage pathway; CTP from cytidine: step 1/3. Its pathway is pyrimidine metabolism; UMP biosynthesis via salvage pathway; UMP from uridine: step 1/1. This is Uridine kinase from Lactiplantibacillus plantarum (strain ATCC BAA-793 / NCIMB 8826 / WCFS1) (Lactobacillus plantarum).